Here is a 444-residue protein sequence, read N- to C-terminus: Protein-serine O-palmitoleoyltransferase porcupine (444 aa).

A run of 10 helical transmembrane segments spans residues 29-49 (NGTLLTLLQMLVLVWMFFLVW), 81-101 (VMIFHTFSLISLFCAVQKLNG), 128-150 (FLTLRGVLMMHIMRLSTASFAIV), 163-183 (TLYLEYIYFPPFIIFGPYVTF), 201-221 (LGVFVQGSVLIFIGITLAIIS), 249-269 (YFICLSTQAFAMFLGSKIVVA), 304-324 (FFQSTALNVLLTFAVSALLHA), 326-346 (DYQMWLTLLALGFIAYSETVF), 383-403 (VLIINLFFMILSMYHLVFTGM), and 420-440 (WTIWGTHYYSSFIVSFAFLAL). The active site involves histidine 323.

It belongs to the membrane-bound acyltransferase family. Porcupine subfamily.

The protein resides in the membrane. It carries out the reaction [Wnt protein]-L-serine + (9Z)-hexadecenoyl-CoA = [Wnt protein]-O-(9Z)-hexadecenoyl-L-serine + CoA. Functionally, key regulator of the Wnt signaling pathway that mediates lipid modification of Wnt proteins. Acts as a protein-serine O-palmitoleoyltransferase that catalyzes the attachment of palmitoleate, a 16-carbon monounsaturated fatty acid (C16:1(9Z)), to Wnt proteins. Serine palmitoleoylation of WNT proteins is required for efficient binding to frizzled receptors. Has a role in cell specification, specifically in blastomere signaling. Involved in cytosketetal polarity. Required for the orientation of mitotic spindle axis. This Caenorhabditis briggsae protein is Protein-serine O-palmitoleoyltransferase porcupine.